We begin with the raw amino-acid sequence, 453 residues long: Probable glycine dehydrogenase (decarboxylating) subunit 1 (453 aa).

This sequence belongs to the GcvP family. N-terminal subunit subfamily. The glycine cleavage system is composed of four proteins: P, T, L and H. In this organism, the P 'protein' is a heterodimer of two subunits.

The enzyme catalyses N(6)-[(R)-lipoyl]-L-lysyl-[glycine-cleavage complex H protein] + glycine + H(+) = N(6)-[(R)-S(8)-aminomethyldihydrolipoyl]-L-lysyl-[glycine-cleavage complex H protein] + CO2. Its function is as follows. The glycine cleavage system catalyzes the degradation of glycine. The P protein binds the alpha-amino group of glycine through its pyridoxal phosphate cofactor; CO(2) is released and the remaining methylamine moiety is then transferred to the lipoamide cofactor of the H protein. This Dictyoglomus turgidum (strain DSM 6724 / Z-1310) protein is Probable glycine dehydrogenase (decarboxylating) subunit 1.